Consider the following 714-residue polypeptide: Mitochondrial potassium channel ATP-binding subunit (714 aa).

A mitochondrion-targeting transit peptide spans 1–25; that stretch reads MLVHLFRVGIRGGPVPRWSLQSLRF. 4 consecutive transmembrane segments (helical) span residues 127–147, 178–198, 278–298, and 365–385; these read LLALGLAIVLALGAALVNVQI, IQLLLLYGVQGLLTFGYLVLL, LMLAVVTPALMGVGTLMGSGL, and NIAFNCMVLGTLFIGGSLVAG. Residues 132–419 form the ABC transmembrane type-1 domain; the sequence is LAIVLALGAA…LSVLFGQVVR (288 aa). One can recognise an ABC transporter domain in the interval 454–691; sequence ITFQNVSFSY…GGLYAELIRR (238 aa). Position 489-496 (489-496) interacts with ATP; the sequence is GQSGGGKT.

This sequence belongs to the ABC transporter superfamily. ABCB family. Multidrug resistance exporter (TC 3.A.1.201) subfamily. As to quaternary structure, the mitochondrial potassium channel (mitoK(ATP)) is composed of 4 subunits of CCDC51/MITOK and 4 subunits of ABCB8/MITOSUR. Physically interacts with PAAT. Interacts with Neuropilin-1 (NRP1) in mitochondria. Strong expression is found in the heart, brain and testis. In the testis, expressed both in the somatic Sertoli cells and peritubular cells and in the germline (spermatogonia and pachytene spermatocytes). Also expressed in the lung, liver, intestine and kidney.

The protein localises to the mitochondrion inner membrane. With respect to regulation, channel activity inhibited by ATP via ABCB8/MITOSUR subunit. Functionally, ATP-binding subunit of the mitochondrial ATP-gated potassium channel (mitoK(ATP)). v. An increase in ATP intracellular levels closes the channel, inhibiting K(+) transport, whereas a decrease in ATP levels enhances K(+) uptake in the mitochondrial matrix. Plays a role in mitochondrial iron transport. Required for maintenance of normal cardiac function, possibly by influencing mitochondrial iron export and regulating the maturation of cytosolic iron sulfur cluster-containing enzymes. This Rattus norvegicus (Rat) protein is Mitochondrial potassium channel ATP-binding subunit.